We begin with the raw amino-acid sequence, 360 residues long: Phosphoserine aminotransferase (360 aa).

An L-glutamate-binding site is contributed by Arg42. Pyridoxal 5'-phosphate-binding residues include Trp102, Thr152, Asp171, and Gln194. Lys195 carries the N6-(pyridoxal phosphate)lysine modification. 237–238 contributes to the pyridoxal 5'-phosphate binding site; that stretch reads NT.

This sequence belongs to the class-V pyridoxal-phosphate-dependent aminotransferase family. SerC subfamily. As to quaternary structure, homodimer. Requires pyridoxal 5'-phosphate as cofactor.

Its subcellular location is the cytoplasm. It carries out the reaction O-phospho-L-serine + 2-oxoglutarate = 3-phosphooxypyruvate + L-glutamate. The catalysed reaction is 4-(phosphooxy)-L-threonine + 2-oxoglutarate = (R)-3-hydroxy-2-oxo-4-phosphooxybutanoate + L-glutamate. The protein operates within amino-acid biosynthesis; L-serine biosynthesis; L-serine from 3-phospho-D-glycerate: step 2/3. It participates in cofactor biosynthesis; pyridoxine 5'-phosphate biosynthesis; pyridoxine 5'-phosphate from D-erythrose 4-phosphate: step 3/5. Its function is as follows. Catalyzes the reversible conversion of 3-phosphohydroxypyruvate to phosphoserine and of 3-hydroxy-2-oxo-4-phosphonooxybutanoate to phosphohydroxythreonine. The chain is Phosphoserine aminotransferase from Coxiella burnetii (strain RSA 493 / Nine Mile phase I).